A 201-amino-acid polypeptide reads, in one-letter code: Ribosomal RNA large subunit methyltransferase E (201 aa).

The S-adenosyl-L-methionine site is built by glycine 49, tryptophan 51, aspartate 69, aspartate 90, and aspartate 113. Lysine 153 functions as the Proton acceptor in the catalytic mechanism.

The protein belongs to the class I-like SAM-binding methyltransferase superfamily. RNA methyltransferase RlmE family.

The protein resides in the cytoplasm. The enzyme catalyses uridine(2552) in 23S rRNA + S-adenosyl-L-methionine = 2'-O-methyluridine(2552) in 23S rRNA + S-adenosyl-L-homocysteine + H(+). Specifically methylates the uridine in position 2552 of 23S rRNA at the 2'-O position of the ribose in the fully assembled 50S ribosomal subunit. This is Ribosomal RNA large subunit methyltransferase E from Desulfotalea psychrophila (strain LSv54 / DSM 12343).